The chain runs to 167 residues: CASP-like protein UU1 (167 aa).

Topologically, residues 1-17 (MVELESQEAVTVASTAD) are cytoplasmic. The chain crosses the membrane as a helical span at residues 18–38 (IAVDVSLRLLAAATSLASAVV). Residues 39 to 54 (VAANHQQRWGVRVDFT) lie on the Extracellular side of the membrane. The helical transmembrane segment at 55–75 (LFQVWIGFVAVNLVCTVYAAA) threads the bilayer. Over 76 to 94 (TAAAARKAMGRWWLHHADA) the chain is Cytoplasmic. A helical membrane pass occupies residues 95–115 (VVVNLEAAATAGAGAIGSIAM). The Extracellular portion of the chain corresponds to 116-135 (WGNEASGWYAVCRLYRRYCN). The helical transmembrane segment at 136–156 (AGAAALALSLAAVLLLGVACA) threads the bilayer. Residues 157 to 167 (RSRYPKMPPTT) are Cytoplasmic-facing.

It belongs to the Casparian strip membrane proteins (CASP) family. Homodimer and heterodimers.

Its subcellular location is the cell membrane. This Oryza sativa subsp. indica (Rice) protein is CASP-like protein UU1.